Here is a 277-residue protein sequence, read N- to C-terminus: Phosphatidylserine decarboxylase proenzyme (277 aa).

Active-site charge relay system; for autoendoproteolytic cleavage activity residues include Asp88, His144, and Ser242. Residue Ser242 is the Schiff-base intermediate with substrate; via pyruvic acid; for decarboxylase activity of the active site. Ser242 carries the post-translational modification Pyruvic acid (Ser); by autocatalysis.

The protein belongs to the phosphatidylserine decarboxylase family. PSD-B subfamily. Prokaryotic type I sub-subfamily. As to quaternary structure, heterodimer of a large membrane-associated beta subunit and a small pyruvoyl-containing alpha subunit. Pyruvate is required as a cofactor. Post-translationally, is synthesized initially as an inactive proenzyme. Formation of the active enzyme involves a self-maturation process in which the active site pyruvoyl group is generated from an internal serine residue via an autocatalytic post-translational modification. Two non-identical subunits are generated from the proenzyme in this reaction, and the pyruvate is formed at the N-terminus of the alpha chain, which is derived from the carboxyl end of the proenzyme. The autoendoproteolytic cleavage occurs by a canonical serine protease mechanism, in which the side chain hydroxyl group of the serine supplies its oxygen atom to form the C-terminus of the beta chain, while the remainder of the serine residue undergoes an oxidative deamination to produce ammonia and the pyruvoyl prosthetic group on the alpha chain. During this reaction, the Ser that is part of the protease active site of the proenzyme becomes the pyruvoyl prosthetic group, which constitutes an essential element of the active site of the mature decarboxylase.

It localises to the cell membrane. The catalysed reaction is a 1,2-diacyl-sn-glycero-3-phospho-L-serine + H(+) = a 1,2-diacyl-sn-glycero-3-phosphoethanolamine + CO2. It functions in the pathway phospholipid metabolism; phosphatidylethanolamine biosynthesis; phosphatidylethanolamine from CDP-diacylglycerol: step 2/2. Its function is as follows. Catalyzes the formation of phosphatidylethanolamine (PtdEtn) from phosphatidylserine (PtdSer). The protein is Phosphatidylserine decarboxylase proenzyme of Psychrobacter arcticus (strain DSM 17307 / VKM B-2377 / 273-4).